The chain runs to 559 residues: Innexin-10 (559 aa).

4 helical membrane passes run 28–48 (YFTC…QFGG), 102–122 (QWVP…SLLW), 182–202 (FLWL…YLCT), and 283–303 (IFIL…GSFF). 2 disordered regions span residues 488 to 514 (EEKQ…YQNQ) and 527 to 559 (YRTP…STFK). Residues 503–514 (YTNQNPTPYQNQ) are compositionally biased toward low complexity. Over residues 528–559 (RTPSLSRGTDSRPVSTATDTDQTKKQSMSTFK) the composition is skewed to polar residues.

It belongs to the pannexin family.

It is found in the cell membrane. It localises to the cell junction. The protein resides in the gap junction. Functionally, structural component of the gap junctions. This chain is Innexin-10 (inx-10), found in Caenorhabditis elegans.